Here is a 336-residue protein sequence, read N- to C-terminus: Fimbrial adhesin PapGII (336 aa).

A signal peptide spans 1-20 (MKKWFPALLFSLCVSGESSA). 2 disulfides stabilise this stretch: cysteine 64–cysteine 138 and cysteine 217–cysteine 249. D-galactose-binding positions include glutamate 79 and 124-127 (GYKW).

Belongs to the adhesin PapG family.

The protein localises to the secreted. It is found in the fimbrium. Its function is as follows. Tip adhesin component of type P pili that plays a critical role in kidney infection through targeted interaction with the globoseries glycolipids containing the Gal-alpha(1-4)-Gal disaccharide present on uroepithelial cells. In turn, transcriptionally regulates host gene expression in kidney cells, leading to inflammatory pathway activation and renal tissue damage. Acts thereby as key determinant of invasive uropathogenic E.coli (UPEC), which cause pyelonephritis and urinary-source bacteremia. This is Fimbrial adhesin PapGII from Escherichia coli O6:H1 (strain CFT073 / ATCC 700928 / UPEC).